The following is a 128-amino-acid chain: Large ribosomal subunit protein bL19 (128 aa).

It belongs to the bacterial ribosomal protein bL19 family.

Its function is as follows. This protein is located at the 30S-50S ribosomal subunit interface and may play a role in the structure and function of the aminoacyl-tRNA binding site. This Verminephrobacter eiseniae (strain EF01-2) protein is Large ribosomal subunit protein bL19.